Reading from the N-terminus, the 491-residue chain is Probable glycine dehydrogenase (decarboxylating) subunit 2 (491 aa).

Lys264 carries the N6-(pyridoxal phosphate)lysine modification.

It belongs to the GcvP family. C-terminal subunit subfamily. As to quaternary structure, the glycine cleavage system is composed of four proteins: P, T, L and H. In this organism, the P 'protein' is a heterodimer of two subunits. The cofactor is pyridoxal 5'-phosphate.

The enzyme catalyses N(6)-[(R)-lipoyl]-L-lysyl-[glycine-cleavage complex H protein] + glycine + H(+) = N(6)-[(R)-S(8)-aminomethyldihydrolipoyl]-L-lysyl-[glycine-cleavage complex H protein] + CO2. Its function is as follows. The glycine cleavage system catalyzes the degradation of glycine. The P protein binds the alpha-amino group of glycine through its pyridoxal phosphate cofactor; CO(2) is released and the remaining methylamine moiety is then transferred to the lipoamide cofactor of the H protein. This is Probable glycine dehydrogenase (decarboxylating) subunit 2 from Coxiella burnetii (strain CbuG_Q212) (Coxiella burnetii (strain Q212)).